The following is an 85-amino-acid chain: Large ribosomal subunit protein bL27 (85 aa).

A compositionally biased stretch (polar residues) spans 1 to 11; the sequence is MASKASGGSTR. Residues 1-20 are disordered; that stretch reads MASKASGGSTRNGRDSISKR.

The protein belongs to the bacterial ribosomal protein bL27 family.

This chain is Large ribosomal subunit protein bL27, found in Sulfurihydrogenibium sp. (strain YO3AOP1).